Consider the following 111-residue polypeptide: Probable 4-amino-4-deoxy-L-arabinose-phosphoundecaprenol flippase subunit ArnE (111 aa).

A run of 3 helical transmembrane segments spans residues 39–59, 61–81, and 89–109; these read WLAI…WVLQ, VPVG…TLAA, and VSLR…CMGV. The EamA domain occupies 40 to 109; the sequence is LAISLLLLGG…IVAGVMCMGV (70 aa).

Belongs to the ArnE family. Heterodimer of ArnE and ArnF.

The protein localises to the cell inner membrane. Its pathway is bacterial outer membrane biogenesis; lipopolysaccharide biosynthesis. In terms of biological role, translocates 4-amino-4-deoxy-L-arabinose-phosphoundecaprenol (alpha-L-Ara4N-phosphoundecaprenol) from the cytoplasmic to the periplasmic side of the inner membrane. This chain is Probable 4-amino-4-deoxy-L-arabinose-phosphoundecaprenol flippase subunit ArnE, found in Sodalis glossinidius (strain morsitans).